A 91-amino-acid chain; its full sequence is MAKGQSLQDPFLNALRRERVPVSIYLVNGIKLQGQVESFDQFVILLKNTVSQMVYKHAISTVVPSRPFNVGSHQGGSSNYNAQQDDSAGEQ.

The Sm domain maps to 9-68; sequence DPFLNALRRERVPVSIYLVNGIKLQGQVESFDQFVILLKNTVSQMVYKHAISTVVPSRPF. The interval 66-91 is disordered; the sequence is RPFNVGSHQGGSSNYNAQQDDSAGEQ. Residues 71–91 are compositionally biased toward polar residues; the sequence is GSHQGGSSNYNAQQDDSAGEQ.

The protein belongs to the Hfq family. Homohexamer.

In terms of biological role, RNA chaperone that binds small regulatory RNA (sRNAs) and mRNAs to facilitate mRNA translational regulation in response to envelope stress, environmental stress and changes in metabolite concentrations. Also binds with high specificity to tRNAs. The sequence is that of RNA-binding protein Hfq from Shewanella amazonensis (strain ATCC BAA-1098 / SB2B).